The sequence spans 67 residues: Conotoxin AbVIN (67 aa).

The N-terminal stretch at 1 to 17 (VIIIAVLFLTACQLIAT) is a signal peptide. Residues 18–40 (ASYARSERKHPDLRLSSRNSKLS) constitute a propeptide that is removed on maturation. 3 disulfide bridges follow: Cys-43/Cys-57, Cys-50/Cys-61, and Cys-56/Cys-66.

The protein belongs to the conotoxin O1 superfamily. Expressed by the venom duct.

It localises to the secreted. This is Conotoxin AbVIN from Conus abbreviatus (Abbreviated cone).